The following is a 258-amino-acid chain: Indole-3-glycerol phosphate synthase 2 (258 aa).

The protein belongs to the TrpC family.

The catalysed reaction is 1-(2-carboxyphenylamino)-1-deoxy-D-ribulose 5-phosphate + H(+) = (1S,2R)-1-C-(indol-3-yl)glycerol 3-phosphate + CO2 + H2O. Its pathway is amino-acid biosynthesis; L-tryptophan biosynthesis; L-tryptophan from chorismate: step 4/5. Its function is as follows. The function of the second trp operon in S.coelicolor is to produce tryptophan for the biosynthesis of calcium-dependent antibiotic (CDA). The chain is Indole-3-glycerol phosphate synthase 2 (trpC2) from Streptomyces coelicolor (strain ATCC BAA-471 / A3(2) / M145).